Here is a 235-residue protein sequence, read N- to C-terminus: 5'-methylthioadenosine/S-adenosylhomocysteine nucleosidase (235 aa).

The active-site Proton acceptor is glutamate 12. Residues glycine 78, isoleucine 152, and 173–174 (ME) contribute to the substrate site. The active-site Proton donor is the aspartate 197.

It belongs to the PNP/UDP phosphorylase family. MtnN subfamily. As to quaternary structure, homodimer.

It catalyses the reaction S-adenosyl-L-homocysteine + H2O = S-(5-deoxy-D-ribos-5-yl)-L-homocysteine + adenine. The catalysed reaction is S-methyl-5'-thioadenosine + H2O = 5-(methylsulfanyl)-D-ribose + adenine. The enzyme catalyses 5'-deoxyadenosine + H2O = 5-deoxy-D-ribose + adenine. The protein operates within amino-acid biosynthesis; L-methionine biosynthesis via salvage pathway; S-methyl-5-thio-alpha-D-ribose 1-phosphate from S-methyl-5'-thioadenosine (hydrolase route): step 1/2. In terms of biological role, catalyzes the irreversible cleavage of the glycosidic bond in both 5'-methylthioadenosine (MTA) and S-adenosylhomocysteine (SAH/AdoHcy) to adenine and the corresponding thioribose, 5'-methylthioribose and S-ribosylhomocysteine, respectively. Also cleaves 5'-deoxyadenosine, a toxic by-product of radical S-adenosylmethionine (SAM) enzymes, into 5-deoxyribose and adenine. Thus, is required for in vivo function of the radical SAM enzymes biotin synthase and lipoic acid synthase, that are inhibited by 5'-deoxyadenosine accumulation. This chain is 5'-methylthioadenosine/S-adenosylhomocysteine nucleosidase, found in Proteus mirabilis (strain HI4320).